The following is a 279-amino-acid chain: Undecaprenyl-diphosphatase (279 aa).

Helical transmembrane passes span 1-21 (MVLEAVLLGIVQGITEFLPIS), 39-59 (GRFFLSSVQLGTSFALILYFF), 96-116 (LLLVTGTIPVVLLGFLLVRFV), 128-148 (FTMGVALIVFGLLLGFADALF), 155-175 (IFQITFIESVLIGAAQVFAII), 201-221 (FSFLLSLPVTFIGGMYGLVAG), 231-251 (YSLIGAIVSFVVGLLVVSALL), and 259-279 (FVLFVYYRVLFGLFLVIVSFF).

Belongs to the UppP family.

It localises to the cell membrane. The enzyme catalyses di-trans,octa-cis-undecaprenyl diphosphate + H2O = di-trans,octa-cis-undecaprenyl phosphate + phosphate + H(+). In terms of biological role, catalyzes the dephosphorylation of undecaprenyl diphosphate (UPP). Confers resistance to bacitracin. This is Undecaprenyl-diphosphatase from Tropheryma whipplei (strain Twist) (Whipple's bacillus).